The primary structure comprises 861 residues: Piwi-like protein 1 (861 aa).

Basic residues predominate over residues 1 to 13 (MTGRARARARGRA). Positions 1–64 (MTGRARARAR…TAGGTAKSQG (64 aa)) are disordered. Residue Arg-14 is modified to Omega-N-methylarginine; by PRMT5; alternate. Arg-14 bears the Symmetric dimethylarginine; by PRMT5; alternate mark. The span at 17–27 (ETAQLVGSTAS) shows a compositional bias: polar residues. At Arg-49 the chain carries Omega-N-methylarginine; by PRMT5. Position 53 is an omega-N-methylarginine; alternate (Arg-53). A Symmetric dimethylarginine; alternate modification is found at Arg-53. A D-box motif is present at residues 217–224 (RRLLKIMN). The 114-residue stretch at 278 to 391 (TVLDFMFNFY…LIPELCYLTG (114 aa)) folds into the PAZ domain. A required for binding 2'-O-methylated 3'-end of piRNAs region spans residues 316–318 (TYR). Position 370 is an omega-N-methylarginine; by PRMT5 (Arg-370). An MID region region spans residues 479–615 (SKETRGAPLI…LQMNCKMGGE (137 aa)). A Piwi domain is found at 555–847 (IVVCLLSSNR…LAFLVGQSIH (293 aa)). Catalysis depends on residues Asp-632, Glu-670, Asp-702, and His-836.

The protein belongs to the argonaute family. Piwi subfamily. Interacts (via Piwi domain) with DICER1, suggesting that it forms ribonucleoprotein RISC complexes; this interaction is regulated by HSP90AB1 activity. Interacts with MAEL, KIF17, PABPC1, PRMT5 and WDR77. Interacts (when methylated on arginine residues) with TDRD1, TDRKH/TDRD2, RNF17/TDRD4, TDRD6, TDRD7 and TDRD9. Interacts with CLOCK. Interacts with MOV10L1. Interacts with ANAPC10; interaction oly takes place following piRNA-binding. Interacts with RNF8; leading to sequester RNF8 in the cytoplasm. Interacts with TEX19. The cofactor is Mg(2+). In terms of processing, arginine methylation by PRMT5 is required for the interaction with Tudor domain-containing protein (TDRD1, TDRKH/TDRD2, RNF17/TDRD4, TDRD6, TDRD7 and TDRD9) and subsequent localization to the meiotic nuage, also named P granule. Ubiquitinated by the anaphase promoting complex/cyclosome (APC/C) in late spermatids, leading to its degradation. Ubiquitination only takes place following piRNA-binding in adult testis. Ubiquitination and degradation in late spermatogenesis by APC/C is probably required to release RNF8 from the cytoplasm and promote histone to protamine exchange by RNF8. Expressed in spermatocytes and spermatids. Also detected in prostate cancer (at protein level). Detected in most fetal and adult tissues. Expressed in testes, specifically in germline cells; detected in spermatocytes and spermatids during spermatogenesis. Increased expression in testicular tumors originating from embryonic germ cells with retention of germ cells phenotype. No expression in testicular tumors of somatic origin, such as Sertoli cell and Leydig cell tumors. Overexpressed in gastric cancer cells. Isoform 3: Ubiquitously expressed, and specifically in CD34(+) hematopoietic progenitor cells but not in more differentiated cells.

Its subcellular location is the cytoplasm. Endoribonuclease that plays a central role in postnatal germ cells by repressing transposable elements and preventing their mobilization, which is essential for the germline integrity. Acts via the piRNA metabolic process, which mediates the repression of transposable elements during meiosis by forming complexes composed of piRNAs and Piwi proteins and governs the methylation and subsequent repression of transposons. Directly binds methylated piRNAs, a class of 24 to 30 nucleotide RNAs that are generated by a Dicer-independent mechanism and are primarily derived from transposons and other repeated sequence elements. Strongly prefers a uridine in the first position of their guide (g1U preference, also named 1U-bias). Not involved in the piRNA amplification loop, also named ping-pong amplification cycle. Acts as an endoribonuclease that cleaves transposon messenger RNAs. Besides their function in transposable elements repression, piRNAs are probably involved in other processes during meiosis such as translation regulation. Probable component of some RISC complex, which mediates RNA cleavage and translational silencing. Also plays a role in the formation of chromatoid bodies and is required for some miRNAs stability. Required to sequester RNF8 in the cytoplasm until late spermatogenesis; RNF8 being released upon ubiquitination and degradation of PIWIL1. Its function is as follows. May be a negative developmental regulator. The sequence is that of Piwi-like protein 1 (PIWIL1) from Homo sapiens (Human).